A 213-amino-acid polypeptide reads, in one-letter code: UPF0301 protein Aave_0907 (213 aa).

Residues 93 to 120 (MGPSSGKQAAGEGGAQAEGEGAEESAYA) are disordered.

Belongs to the UPF0301 (AlgH) family.

The chain is UPF0301 protein Aave_0907 from Paracidovorax citrulli (strain AAC00-1) (Acidovorax citrulli).